The primary structure comprises 235 residues: Attacin-E (235 aa).

An N-terminal signal peptide occupies residues 1-19 (MFGKIVFLLLVALCAGVQS). The propeptide occupies 20–47 (RYLIVSEPVYYIEHYEEPELLASSRVRR).

Belongs to the attacin/sarcotoxin-2 family. Post-translationally, attacin F appears to be derived by proteolytic digestion of attacin E.

It localises to the secreted. Its function is as follows. Hemolymph antibacterial protein. This chain is Attacin-E, found in Hyalophora cecropia (Cecropia moth).